A 347-amino-acid chain; its full sequence is Phosphoribosylformylglycinamidine cyclo-ligase (347 aa).

Belongs to the AIR synthase family.

Its subcellular location is the cytoplasm. It catalyses the reaction 2-formamido-N(1)-(5-O-phospho-beta-D-ribosyl)acetamidine + ATP = 5-amino-1-(5-phospho-beta-D-ribosyl)imidazole + ADP + phosphate + H(+). Its pathway is purine metabolism; IMP biosynthesis via de novo pathway; 5-amino-1-(5-phospho-D-ribosyl)imidazole from N(2)-formyl-N(1)-(5-phospho-D-ribosyl)glycinamide: step 2/2. This chain is Phosphoribosylformylglycinamidine cyclo-ligase, found in Yersinia pseudotuberculosis serotype IB (strain PB1/+).